A 622-amino-acid polypeptide reads, in one-letter code: Basic helix-loop-helix ARNT-like protein 2 (622 aa).

Positions 1–10 (MAEAGVGSAE) are enriched in low complexity. 2 disordered regions span residues 1-29 (MAEA…DGNS) and 41-86 (PITK…EDEE). A compositionally biased stretch (polar residues) spans 45–54 (PATTSFNNSV). Acidic residues predominate over residues 67–76 (DNQDTVEVDG). The segment covering 77 to 86 (DPQKRNEDEE) has biased composition (basic and acidic residues). In terms of domain architecture, bHLH spans 92–145 (DFREAHSQTEKRRRDKMNNLIEELSAMIPQCNPMARKLDKLTVLRMAVQHLKSL). PAS domains are found at residues 163 to 235 (KDDE…DVSP) and 342 to 412 (VPQK…LQNK). Residues 417–460 (TNSYKFRAKDGSFITLKSQWFSFMNPWTKELEYIVSNNTVVLGH) enclose the PAC domain.

In terms of assembly, component of the circadian core oscillator, which includes the CRY proteins, CLOCK, or NPAS2, BMAL1 or BMAL2, CSNK1D and/or CSNK1E, TIMELESS and the PER proteins. Interacts directly with CLOCK to form the BMAL2-CLOCK transactivator. Can form heterodimers or homodimers which interact directly with CLOCK to form the transcription activator. As to expression, expressed in the pineal gland.

It localises to the nucleus. Transcriptional activator which forms a core component of the circadian clock. The circadian clock, an internal time-keeping system, regulates various physiological processes through the generation of approximately 24 hour circadian rhythms in gene expression, which are translated into rhythms in metabolism and behavior. It is derived from the Latin roots 'circa' (about) and 'diem' (day) and acts as an important regulator of a wide array of physiological functions including metabolism, sleep, body temperature, blood pressure, endocrine, immune, cardiovascular, and renal function. Consists of two major components: the central clock, residing in the suprachiasmatic nucleus (SCN) of the brain, and the peripheral clocks that are present in nearly every tissue and organ system. Both the central and peripheral clocks can be reset by environmental cues, also known as Zeitgebers (German for 'timegivers'). The predominant Zeitgeber for the central clock is light, which is sensed by retina and signals directly to the SCN. The central clock entrains the peripheral clocks through neuronal and hormonal signals, body temperature and feeding-related cues, aligning all clocks with the external light/dark cycle. Circadian rhythms allow an organism to achieve temporal homeostasis with its environment at the molecular level by regulating gene expression to create a peak of protein expression once every 24 hours to control when a particular physiological process is most active with respect to the solar day. Transcription and translation of core clock components (CLOCK, NPAS2, BMAL1, BMAL2, PER1, PER2, PER3, CRY1 and CRY2) plays a critical role in rhythm generation, whereas delays imposed by post-translational modifications (PTMs) are important for determining the period (tau) of the rhythms (tau refers to the period of a rhythm and is the length, in time, of one complete cycle). A diurnal rhythm is synchronized with the day/night cycle, while the ultradian and infradian rhythms have a period shorter and longer than 24 hours, respectively. Disruptions in the circadian rhythms contribute to the pathology of cardiovascular diseases, cancer, metabolic syndromes and aging. A transcription/translation feedback loop (TTFL) forms the core of the molecular circadian clock mechanism. Transcription factors, CLOCK or NPAS2 and BMAL1 or BMAL2, form the positive limb of the feedback loop, act in the form of a heterodimer and activate the transcription of core clock genes and clock-controlled genes (involved in key metabolic processes), harboring E-box elements (5'-CACGTG-3') within their promoters. The core clock genes: PER1/2/3 and CRY1/2 which are transcriptional repressors form the negative limb of the feedback loop and interact with the CLOCK|NPAS2-BMAL1|BMAL2 heterodimer inhibiting its activity and thereby negatively regulating their own expression. This heterodimer also activates nuclear receptors NR1D1/2 and RORA/B/G, which form a second feedback loop and which activate and repress BMAL1 transcription, respectively. The preferred binding motif for the CLOCK-BMAL1 heterodimer is 5'-CACGTGA-3', which contains a flanking adenine nucleotide at the 3-prime end of the canonical 6-nucleotide E-box sequence. CLOCK specifically binds to the half-site 5'-CAC-3', while BMAL1 binds to the half-site 5'-GTGA-3'. The polypeptide is Basic helix-loop-helix ARNT-like protein 2 (BMAL2) (Gallus gallus (Chicken)).